The primary structure comprises 68 residues: Large ribosomal subunit protein bL33c (68 aa).

It belongs to the bacterial ribosomal protein bL33 family.

It localises to the plastid. The polypeptide is Large ribosomal subunit protein bL33c (Cuscuta reflexa (Southern Asian dodder)).